Consider the following 422-residue polypeptide: Probable ornithine aminotransferase, mitochondrial (422 aa).

An N6-(pyridoxal phosphate)lysine modification is found at Lys-273.

It belongs to the class-III pyridoxal-phosphate-dependent aminotransferase family. It depends on pyridoxal 5'-phosphate as a cofactor.

The protein resides in the mitochondrion matrix. It carries out the reaction a 2-oxocarboxylate + L-ornithine = L-glutamate 5-semialdehyde + an L-alpha-amino acid. Its pathway is amino-acid biosynthesis; L-proline biosynthesis; L-glutamate 5-semialdehyde from L-ornithine: step 1/1. This chain is Probable ornithine aminotransferase, mitochondrial, found in Caenorhabditis elegans.